The chain runs to 252 residues: Orotidine 5'-phosphate decarboxylase (252 aa).

Substrate-binding positions include D24, K46, 73–82, T137, R199, Q208, G228, and R229; that span reads DLKFHDIPNT. K75 acts as the Proton donor in catalysis.

The protein belongs to the OMP decarboxylase family. Type 1 subfamily. In terms of assembly, homodimer.

The catalysed reaction is orotidine 5'-phosphate + H(+) = UMP + CO2. It functions in the pathway pyrimidine metabolism; UMP biosynthesis via de novo pathway; UMP from orotate: step 2/2. Its function is as follows. Catalyzes the decarboxylation of orotidine 5'-monophosphate (OMP) to uridine 5'-monophosphate (UMP). This is Orotidine 5'-phosphate decarboxylase from Moorella thermoacetica (strain ATCC 39073 / JCM 9320).